A 772-amino-acid polypeptide reads, in one-letter code: Acylamino-acid-releasing enzyme 2 (772 aa).

Catalysis depends on charge relay system residues serine 617, aspartate 708, and histidine 740.

The protein belongs to the peptidase S9C family. In terms of assembly, homotetramer.

The protein resides in the cytoplasm. It catalyses the reaction Cleavage of an N-acetyl or N-formyl amino acid from the N-terminus of a polypeptide.. In terms of biological role, catalyzes the hydrolysis of the N-terminal peptide bond of an N-acetylated peptide to generate an N-acetylated amino acid and a peptide with a free N-terminus. In Oryza sativa subsp. japonica (Rice), this protein is Acylamino-acid-releasing enzyme 2.